Reading from the N-terminus, the 242-residue chain is Small ribosomal subunit protein uS3 (242 aa).

The KH type-2 domain occupies 39–110 (IRKFIHKKYG…QVRINVVEVE (72 aa)). A disordered region spans residues 221–242 (GASPRRRASRRPQQFEDRSNEG). Residues 233–242 (QQFEDRSNEG) are compositionally biased toward basic and acidic residues.

The protein belongs to the universal ribosomal protein uS3 family. In terms of assembly, part of the 30S ribosomal subunit. Forms a tight complex with proteins S10 and S14.

Its function is as follows. Binds the lower part of the 30S subunit head. Binds mRNA in the 70S ribosome, positioning it for translation. The chain is Small ribosomal subunit protein uS3 from Parasynechococcus marenigrum (strain WH8102).